The primary structure comprises 249 residues: Derlin-2.2 (249 aa).

At 1-21 the chain is on the cytoplasmic side; sequence MAQAVEEWYRQMPIITRSYLT. The helical transmembrane segment at 22-42 threads the bilayer; that stretch reads AAVVTTVGCTLEIISPYHLYL. Topologically, residues 43–96 are lumenal; it reads NPKLVVQHYEIWRLVTNFLYFRKMDLDFLFHMFFLARYCKLLEENSFRGRTADF. Residues 97-117 form a helical membrane-spanning segment; the sequence is FYMLLFGATVLTGIVLIGGMI. Residues 118-122 lie on the Cytoplasmic side of the membrane; sequence PYISE. Residues 123–143 form a helical membrane-spanning segment; it reads TFARILFLSNSLTFMMVYVWS. Residues 144–152 are Lumenal-facing; that stretch reads KHNPFIHMS. Residues 153–173 form a helical membrane-spanning segment; it reads FLGLFTFTAAYLPWVLLGFSI. Topologically, residues 174–249 are cytoplasmic; the sequence is LVGSSTWVDL…GAIGVDPQAQ (76 aa).

Belongs to the derlin family. In terms of tissue distribution, expressed in roots, stalks, leaves, immature ears, embryo and endosperm.

The protein resides in the endoplasmic reticulum membrane. May be involved in the degradation process of specific misfolded endoplasmic reticulum (ER) luminal proteins. The chain is Derlin-2.2 (DER2.2) from Zea mays (Maize).